Consider the following 37-residue polypeptide: GCLGEGEKCADWSGPSCCDGFYCSCRSMPYCRCRNNS.

4 disulfides stabilise this stretch: Cys2/Cys18, Cys9/Cys23, Cys17/Cys33, and Cys25/Cys31. Residue Ser37 is modified to Serine amide.

This sequence belongs to the neurotoxin 07 (Beta/delta-agtx) family. 02 (aga-3) subfamily. In terms of tissue distribution, expressed by the venom gland.

Its subcellular location is the secreted. Binds at site 4 of sodium channels (Nav) and inhibits the fast inactivation of cockroach channels. This toxin is active only on insects. Has a potent activity against S.litura larvae. The chain is Delta-amaurobitoxin-Pl1a from Pireneitega luctuosa (Tangled nest spider).